The following is a 428-amino-acid chain: MSNIVIVGAQWGDEGKGKIADTLAEKADLVVRYQGGNNAGHTLVVNGKKTFLHLIPSGVLHQHTKCVIGHGVVLDPVALDEEITRLQAKGIAISAENLFVSESCTIITSYHKLLDAVRESNTSEKIGTTGKGIGPAYEDKVSRKGIKFKHLFDKDLLRSRLAISLAEKETLFRDLYKVEYPTLEQEFDKLFALGQKLKQYAADTFSIIDQAIAAGKNVVYEGAQGVLLDVDYGTYPFVTSSNTSVAGVYSGATTAGHGLDHVIGITKAYTTRVGEGPFPTELFDDVGKFIQHKGGEIGVTTGRIRRCGWLDLPLLKYSAKCSNLTSIALTKVDVLSDMDTLKVCIGYKYEGKEIYCAYPGIDLYKVEPILVEMEPFSIDETVTKDNMPAALKTYLKTIENHVGIPISSLAYGPSREQILFFEDYFKKG.

GTP contacts are provided by residues 12 to 18 (GDEGKGK) and 40 to 42 (GHT). Residue D13 is the Proton acceptor of the active site. Mg(2+)-binding residues include D13 and G40. IMP contacts are provided by residues 13-16 (DEGK), 38-41 (NAGH), T129, R143, Q224, T239, and R303. H41 serves as the catalytic Proton donor. Substrate is bound at residue 299–305 (VTTGRIR). GTP contacts are provided by residues R305, 331–333 (KVD), and 410–412 (AYG).

It belongs to the adenylosuccinate synthetase family. As to quaternary structure, homodimer. Requires Mg(2+) as cofactor.

The protein localises to the cytoplasm. It carries out the reaction IMP + L-aspartate + GTP = N(6)-(1,2-dicarboxyethyl)-AMP + GDP + phosphate + 2 H(+). The protein operates within purine metabolism; AMP biosynthesis via de novo pathway; AMP from IMP: step 1/2. Functionally, plays an important role in the de novo pathway of purine nucleotide biosynthesis. Catalyzes the first committed step in the biosynthesis of AMP from IMP. This Francisella tularensis subsp. holarctica (strain FTNF002-00 / FTA) protein is Adenylosuccinate synthetase.